The sequence spans 538 residues: MAATGTEKQGAKAYYVSTPIYYVNDAPHLGHAYTTVAGDVLTRWHRQRGEKVWYLTGTDEHGQKIMRTAEANGVTPQAWADKLVTESWKPLWEHLDIANDDFIRTTQKRHTDRVQEFVQDLYDKGEIYKGGYEGPYCVGCEEYKLPGELLDGEGEYAGQKLCPIHKKPVEILSEENYFFKLSEYSEKLLAHYEANPGFVQPESARNEVVNFVRQGLQDLSISRSTFDWGVPVPWDDKHVIYVWVDALLNYATAVGYNENPEKFESTFPADVHLVGKDILRFHAIIWPAMLMAQGLPLPGKIAANGWLMVGGEKMSKSNLTGIKPQDLTTHFGVDAYRWYFLRAIAFGQDGSFSWEDFSARYTSELANDYGNLASRVAAMVGKYFGGELPAATADGDAEQAIHDGLTKAVAEADRKIGEELDFQGGILAVFDFVKQVNGYITEQEPWKVAKDDSPEGKARLATILYTAAEALRAVAVLLNPIMPDTSQKLWDSLGAEPSLGALADQHVQDAADWGRLPAGATVTKGAVLFPRLEEKPAA.

Residues 21–31 (YYVNDAPHLGH) carry the 'HIGH' region motif. Residues cysteine 137, cysteine 140, cysteine 162, and histidine 165 each coordinate Zn(2+). Positions 313 to 317 (KMSKS) match the 'KMSKS' region motif. ATP is bound at residue lysine 316.

The protein belongs to the class-I aminoacyl-tRNA synthetase family. MetG type 2A subfamily. As to quaternary structure, monomer. The cofactor is Zn(2+).

Its subcellular location is the cytoplasm. The catalysed reaction is tRNA(Met) + L-methionine + ATP = L-methionyl-tRNA(Met) + AMP + diphosphate. Its function is as follows. Is required not only for elongation of protein synthesis but also for the initiation of all mRNA translation through initiator tRNA(fMet) aminoacylation. This chain is Methionine--tRNA ligase, found in Streptomyces coelicolor (strain ATCC BAA-471 / A3(2) / M145).